The primary structure comprises 231 residues: D-allulose-6-phosphate 3-epimerase (231 aa).

A substrate-binding site is contributed by S6. Residues H30, D32, and H63 each contribute to the a divalent metal cation site. D32 functions as the Proton acceptor in the catalytic mechanism. Residues H63, 140-143 (GFAG), 173-175 (DGS), and 195-197 (GTS) contribute to the substrate site. Residue D173 coordinates a divalent metal cation. Catalysis depends on D173, which acts as the Proton donor.

It belongs to the ribulose-phosphate 3-epimerase family. AlsE subfamily. As to quaternary structure, homohexamer. Trimer of dimers. It depends on Co(2+) as a cofactor. Requires Mn(2+) as cofactor. The cofactor is Zn(2+).

It catalyses the reaction D-allulose 6-phosphate = keto-D-fructose 6-phosphate. It functions in the pathway carbohydrate degradation; D-allose degradation. Catalyzes the reversible epimerization of D-allulose 6-phosphate to D-fructose 6-phosphate. Can also catalyze with lower efficiency the reversible epimerization of D-ribulose 5-phosphate to D-xylulose 5-phosphate. The protein is D-allulose-6-phosphate 3-epimerase of Escherichia coli (strain K12).